Here is a 381-residue protein sequence, read N- to C-terminus: Acetylornithine deacetylase (381 aa).

His79 contributes to the Zn(2+) binding site. Asp81 is a catalytic residue. Asp111 is a Zn(2+) binding site. Residue Glu143 is part of the active site. Residues Glu144, Glu168, and His354 each contribute to the Zn(2+) site.

It belongs to the peptidase M20A family. ArgE subfamily. As to quaternary structure, homodimer. Zn(2+) serves as cofactor. The cofactor is Co(2+). Requires glutathione as cofactor.

Its subcellular location is the cytoplasm. The enzyme catalyses N(2)-acetyl-L-ornithine + H2O = L-ornithine + acetate. It participates in amino-acid biosynthesis; L-arginine biosynthesis; L-ornithine from N(2)-acetyl-L-ornithine (linear): step 1/1. Catalyzes the hydrolysis of the amide bond of N(2)-acetylated L-amino acids. Cleaves the acetyl group from N-acetyl-L-ornithine to form L-ornithine, an intermediate in L-arginine biosynthesis pathway, and a branchpoint in the synthesis of polyamines. This chain is Acetylornithine deacetylase, found in Buchnera aphidicola subsp. Acyrthosiphon pisum (strain APS) (Acyrthosiphon pisum symbiotic bacterium).